Reading from the N-terminus, the 820-residue chain is Phenylalanine--tRNA ligase beta subunit (820 aa).

The tRNA-binding domain maps to 42–154 (KGGLEGLVIG…EDAVPGTLAK (113 aa)). Residues 413–489 (AQDFIVELTY…RIYGYNNVEI (77 aa)) form the B5 domain. Mg(2+)-binding residues include D467, D473, E476, and D477. Positions 727 to 820 (SKFPAVKRDL…LEDKLGAKLR (94 aa)) constitute an FDX-ACB domain.

This sequence belongs to the phenylalanyl-tRNA synthetase beta subunit family. Type 1 subfamily. Tetramer of two alpha and two beta subunits. The cofactor is Mg(2+).

Its subcellular location is the cytoplasm. It catalyses the reaction tRNA(Phe) + L-phenylalanine + ATP = L-phenylalanyl-tRNA(Phe) + AMP + diphosphate + H(+). In Bacteroides fragilis (strain ATCC 25285 / DSM 2151 / CCUG 4856 / JCM 11019 / LMG 10263 / NCTC 9343 / Onslow / VPI 2553 / EN-2), this protein is Phenylalanine--tRNA ligase beta subunit.